Consider the following 706-residue polypeptide: Fatty acid oxidation complex subunit alpha (706 aa).

The interval 1–188 is enoyl-CoA hydratase; that stretch reads MEKTFNLTRR…KMGLVNDVVP (188 aa). The 3-hydroxyacyl-CoA dehydrogenase stretch occupies residues 308 to 706; it reads RKVKKAVILG…TMAQENAHFF (399 aa).

In the N-terminal section; belongs to the enoyl-CoA hydratase/isomerase family. The protein in the central section; belongs to the 3-hydroxyacyl-CoA dehydrogenase family. In terms of assembly, heterotetramer of two alpha chains (FadJ) and two beta chains (FadI).

It is found in the cytoplasm. It carries out the reaction a (3S)-3-hydroxyacyl-CoA = a (2E)-enoyl-CoA + H2O. It catalyses the reaction a 4-saturated-(3S)-3-hydroxyacyl-CoA = a (3E)-enoyl-CoA + H2O. The enzyme catalyses a (3S)-3-hydroxyacyl-CoA + NAD(+) = a 3-oxoacyl-CoA + NADH + H(+). The catalysed reaction is (3S)-3-hydroxybutanoyl-CoA = (3R)-3-hydroxybutanoyl-CoA. The protein operates within lipid metabolism; fatty acid beta-oxidation. Its function is as follows. Catalyzes the formation of a hydroxyacyl-CoA by addition of water on enoyl-CoA. Also exhibits 3-hydroxyacyl-CoA epimerase and 3-hydroxyacyl-CoA dehydrogenase activities. This Shewanella baltica (strain OS155 / ATCC BAA-1091) protein is Fatty acid oxidation complex subunit alpha.